The sequence spans 333 residues: Probable HTH-type transcriptional repressor ExuR (333 aa).

The 55-residue stretch at 2-56 (VTIKDIAKLANVSHTTVSRALNNSPYIKEHTKKKILELAEQLNYTPNVNAKSLAM) folds into the HTH lacI-type domain. The segment at residues 4-23 (IKDIAKLANVSHTTVSRALN) is a DNA-binding region (H-T-H motif).

Its function is as follows. Transcriptional repressor for the exu locus which is required for galacturonate utilization. The chain is Probable HTH-type transcriptional repressor ExuR (exuR) from Bacillus subtilis (strain 168).